A 241-amino-acid chain; its full sequence is LexA repressor (241 aa).

Positions 26-46 (FDEMKTALDLRSKSGIHRLIT) form a DNA-binding region, H-T-H motif. Catalysis depends on for autocatalytic cleavage activity residues Ser-162 and Lys-200.

Belongs to the peptidase S24 family. Homodimer.

It catalyses the reaction Hydrolysis of Ala-|-Gly bond in repressor LexA.. Its function is as follows. Represses a number of genes involved in the response to DNA damage (SOS response), including recA and lexA. In the presence of single-stranded DNA, RecA interacts with LexA causing an autocatalytic cleavage which disrupts the DNA-binding part of LexA, leading to derepression of the SOS regulon and eventually DNA repair. In Ruegeria sp. (strain TM1040) (Silicibacter sp.), this protein is LexA repressor.